Consider the following 251-residue polypeptide: Outer membrane protein assembly factor BamD (251 aa).

An N-terminal signal peptide occupies residues 1–19 (MKLTKLLSALLVIGLVLGG). Cys20 carries N-palmitoyl cysteine lipidation. Residue Cys20 is the site of S-diacylglycerol cysteine attachment. TPR repeat units lie at residues 33 to 66 (IATL…HPGN), 70 to 103 (PQAE…HPAN), and 166 to 199 (AGKE…YQTT).

It belongs to the BamD family. Part of the Bam complex.

The protein localises to the cell outer membrane. Its function is as follows. Part of the outer membrane protein assembly complex, which is involved in assembly and insertion of beta-barrel proteins into the outer membrane. The chain is Outer membrane protein assembly factor BamD from Rickettsia prowazekii (strain Madrid E).